The chain runs to 235 residues: Orotidine 5'-phosphate decarboxylase (235 aa).

Substrate contacts are provided by residues D10, K33, 60 to 69 (DLKMHDIPNT), T123, R185, Q194, G214, and R215. K62 acts as the Proton donor in catalysis.

Belongs to the OMP decarboxylase family. Type 1 subfamily. Homodimer.

It carries out the reaction orotidine 5'-phosphate + H(+) = UMP + CO2. Its pathway is pyrimidine metabolism; UMP biosynthesis via de novo pathway; UMP from orotate: step 2/2. Functionally, catalyzes the decarboxylation of orotidine 5'-monophosphate (OMP) to uridine 5'-monophosphate (UMP). The chain is Orotidine 5'-phosphate decarboxylase from Lactobacillus acidophilus (strain ATCC 700396 / NCK56 / N2 / NCFM).